The following is a 178-amino-acid chain: Histone H3-like centromeric protein CENH3 (178 aa).

A disordered region spans residues Met-1–Arg-81. Residue Lys-5 is modified to N6,N6,N6-trimethyllysine; alternate. At Lys-5 the chain carries N6,N6-dimethyllysine; alternate. Lys-5 carries the N6-methyllysine; alternate modification. Ser-11 bears the Phosphoserine mark. A compositionally biased stretch (low complexity) spans Gln-16–Arg-36. A compositionally biased stretch (polar residues) spans Asp-43–Thr-56. N6-methyllysine; alternate is present on residues Lys-63 and Lys-75. Lys-63 bears the N6-acetyllysine; alternate mark. Lys-75 carries the N6,N6,N6-trimethyllysine; alternate modification. An N6,N6-dimethyllysine; alternate modification is found at Lys-75.

The protein belongs to the histone H3 family. In terms of assembly, forms a nucleosome-like histone octamer containing two molecules each of H2A, H2B, CENH3 and H4 assembled in one CENH3-H4 heterotetramer and two H2A-H2B heterodimers. Interacts with ORTH2.

It localises to the chromosome. It is found in the centromere. Its subcellular location is the kinetochore. Histone H3-like variant which exclusively replaces conventional H3 in the nucleosome core of centromeric chromatin at the inner plate of the kinetochore. Required for recruitment and assembly of kinetochore proteins, mitotic progression and chromosome segregation. May serve as an epigenetic mark that propagates centromere identity through replication and cell division. In Arabidopsis thaliana (Mouse-ear cress), this protein is Histone H3-like centromeric protein CENH3.